The following is a 130-amino-acid chain: MTLLDPLANALSHITNSERVGKREVYIKPASKLIGEVLRVMQKYGYIGEFEFIDDGRAGVYRVQLLGRINKAGAIKPRFPVKVSEFEKWEKRFLPAFEFGILIVSTSQGVMSHKEAIEKGIGGRLIAYVY.

Belongs to the universal ribosomal protein uS8 family. Part of the 30S ribosomal subunit.

In terms of biological role, one of the primary rRNA binding proteins, it binds directly to 16S rRNA central domain where it helps coordinate assembly of the platform of the 30S subunit. The polypeptide is Small ribosomal subunit protein uS8 (Pyrococcus furiosus (strain ATCC 43587 / DSM 3638 / JCM 8422 / Vc1)).